We begin with the raw amino-acid sequence, 862 residues long: Probable linoleate 9S-lipoxygenase 5 (862 aa).

A PLAT domain is found at 36–161 (NDVNASLLDG…KYKSERIFFA (126 aa)). One can recognise a Lipoxygenase domain in the interval 164–862 (AYLPGETPEP…GKGIPNSVSI (699 aa)). 5 residues coordinate Fe cation: histidine 523, histidine 528, histidine 714, asparagine 718, and isoleucine 862.

Belongs to the lipoxygenase family. As to quaternary structure, monomer. Requires Fe cation as cofactor. In terms of tissue distribution, not detected in leaves, stems, flowers, roots, tubers and stolons during normal growth and development.

It localises to the cytoplasm. The enzyme catalyses (9Z,12Z)-octadecadienoate + O2 = (9S)-hydroperoxy-(10E,12Z)-octadecadienoate. Its pathway is lipid metabolism; oxylipin biosynthesis. Plant lipoxygenases may be involved in a number of diverse aspects of plant physiology including growth and development, pest resistance, and senescence or responses to wounding. May contribute to cell death during the hypersensitive response (HR) by the massive production of free fatty acid hydroperoxides. Catalyzes the hydroperoxidation of lipids containing a cis,cis-1,4-pentadiene structure. This Solanum tuberosum (Potato) protein is Probable linoleate 9S-lipoxygenase 5 (LOX1.5).